The sequence spans 834 residues: WW domain-containing adapter protein with coiled-coil homolog (834 aa).

Disordered regions lie at residues 1 to 247, 268 to 411, and 430 to 504; these read MVMH…WSEH, KPKE…SVAT, and VTGA…GAKG. The span at 22–31 shows a compositional bias: low complexity; it reads HTSYQSSKYS. The span at 33-50 shows a compositional bias: basic and acidic residues; sequence SKRDYERDRSSNYRDRDL. A compositionally biased stretch (gly residues) spans 53–77; the sequence is GAGGGGGGGSAGGGGGGSGNGGGPL. The segment covering 96–108 has biased composition (basic and acidic residues); that stretch reads RSHDLRDRSDHRG. Residues 109–119 are compositionally biased toward gly residues; that stretch reads GGGGNGRGGSG. 3 stretches are compositionally biased toward basic and acidic residues: residues 127–168, 181–246, and 268–303; these read KMRD…DRRG, SSRE…DWSE, and KPKE…DRFS. Positions 244–271 constitute a WW domain; it reads WSEHVSSSGKMYYYNCKTEISQWEKPKE. 2 stretches are compositionally biased toward polar residues: residues 304-314 and 350-363; these read RSTYKHSNSSR and GDST…YSLS. The segment covering 369–384 has biased composition (gly residues); it reads HGGGPGGGGPGGGGGS. Low complexity-rich tracts occupy residues 402 to 411 and 431 to 466; these read TANSSASVAT and TGAT…LRNS. Residues 472-496 are compositionally biased toward polar residues; the sequence is GSTSGTTVPTLGSQDPHQHHLNSNA.

Expressed in adult head and thorax and in larval central nervous system and fat body.

It is found in the nucleus. The protein localises to the lysosome. In terms of biological role, acts as a linker between gene transcription and histone H2B monoubiquitination at 'Lys-118'. Regulates the cell-cycle checkpoint activation in response to DNA damage. Positive regulator of amino acid starvation-induced autophagy. Also acts as a negative regulator of basal autophagy. Positively regulates mTor activity. Promotes, in an energy-dependent manner, the assembly of the TTT complex and the RUVBL complex composed of pont and rept into the TTT-RUVBL complex. This leads to dimerization of the mTORC1 complex and its subsequent activation. May negatively regulate the ubiquitin proteasome pathway. Required for habituation, a form of non-associative learning. The polypeptide is WW domain-containing adapter protein with coiled-coil homolog (Drosophila melanogaster (Fruit fly)).